The primary structure comprises 184 residues: Lactoylglutathione lyase (184 aa).

Ala-2 is subject to N-acetylalanine. Cys-19 and Cys-20 are disulfide-bonded. In terms of domain architecture, VOC spans 31-177; it reads LLQQTMLRIK…DGYWIEILNP (147 aa). Residues Gln-34 and Arg-38 each contribute to the substrate site. Residue Gln-34 coordinates Zn(2+). Lys-88 carries the N6-succinyllysine modification. Position 100 (Glu-100) interacts with Zn(2+). A substrate-binding site is contributed by Asn-104. Phosphothreonine is present on Thr-107. Positions 123 and 127 each coordinate substrate. His-127 provides a ligand contact to Zn(2+). Cys-139 carries the post-translational modification S-glutathionyl cysteine. Lys-148 carries the N6-acetyllysine; alternate modification. At Lys-148 the chain carries N6-succinyllysine; alternate. Residue 157–158 participates in substrate binding; it reads KM. Glu-173 contributes to the Zn(2+) binding site. Glu-173 serves as the catalytic Proton donor/acceptor.

This sequence belongs to the glyoxalase I family. As to quaternary structure, homodimer. Zn(2+) is required as a cofactor. Post-translationally, glutathionylation at Cys-139 inhibits enzyme activity. In terms of processing, phosphorylated at Thr-107 in the presence of CaMK2. However, this is a consensus site for phosphorylation by CK2 so phosphorylation may be mediated by CK2 rather than CaMK2. Phosphorylation is induced by TNF and suppresses the TNF-induced transcriptional activity of NF-kappa-B. Exists in a nitric oxide (NO)-modified form. The exact nature of the modification is unknown, but it suppresses the TNF-induced transcriptional activity of NF-kappa-B.

It catalyses the reaction (R)-S-lactoylglutathione = methylglyoxal + glutathione. The protein operates within secondary metabolite metabolism; methylglyoxal degradation; (R)-lactate from methylglyoxal: step 1/2. Its activity is regulated as follows. Subject to competitive inhibition by methyl-gerfelin. In terms of biological role, catalyzes the conversion of hemimercaptal, formed from methylglyoxal and glutathione, to S-lactoylglutathione. Involved in the regulation of TNF-induced transcriptional activity of NF-kappa-B. Required for normal osteoclastogenesis. This is Lactoylglutathione lyase (Glo1) from Mus musculus (Mouse).